Reading from the N-terminus, the 1339-residue chain is Retrotransposon Gag-like protein 9 (1339 aa).

3 stretches are compositionally biased toward polar residues: residues 533-545 (TVPTSGSVSTQKT), 679-693 (SGTKSTSQMTATTSG), and 700-711 (TRLSGPGATSTP). 6 disordered regions span residues 533–555 (TVPTSGSVSTQKTRAPVSGPMST), 679–711 (SGTKSTSQMTATTSGGIFMPQTRLSGPGATSTP), 845–864 (GVMSIPLTRTPASRAKSRPQ), 880–901 (PATAGISPSPVRSPASSTLSTL), 982–1010 (ATSLPQPRNAASGVIANPPQRAPASGAGS), and 1078–1116 (ATDSGEASTSHTRFTAPGSKSTPHMTSTAPEMKTPPPKE). Over residues 891–901 (RSPASSTLSTL) the composition is skewed to low complexity. Over residues 1078–1106 (ATDSGEASTSHTRFTAPGSKSTPHMTSTA) the composition is skewed to polar residues.

This is Retrotransposon Gag-like protein 9 from Mus musculus (Mouse).